The chain runs to 507 residues: Maturase K (507 aa).

The protein belongs to the intron maturase 2 family. MatK subfamily.

It localises to the plastid. It is found in the chloroplast. Its function is as follows. Usually encoded in the trnK tRNA gene intron. Probably assists in splicing its own and other chloroplast group II introns. In Persea americana (Avocado), this protein is Maturase K.